The chain runs to 897 residues: Cytokine receptor common subunit beta (897 aa).

An N-terminal signal peptide occupies residues 1 to 16 (MVLAQGLLSMALLALC). Residues 17 to 443 (WERSLAGAEE…WDTESVLPMW (427 aa)) lie on the Extracellular side of the membrane. An intrachain disulfide couples C35 to C45. The N-linked (GlcNAc...) asparagine glycan is linked to N58. Intrachain disulfides connect C75-C96 and C86-C91. Residues 133–240 (PPEPRDLQIS…PEVCWDSQPG (108 aa)) form the Fibronectin type-III 1 domain. The N-linked (GlcNAc...) asparagine glycan is linked to N191. Intrachain disulfides connect C250–C260 and C289–C306. The Fibronectin type-III 2 domain occupies 339–436 (QMAPPSLNVT…EWSEARSWDT (98 aa)). N-linked (GlcNAc...) asparagine glycosylation is present at N346. The WSXWS motif signature appears at 425–429 (WSEWS). Residues 444–460 (VLALIVIFLTIAVLLAL) traverse the membrane as a helical segment. The Cytoplasmic segment spans residues 461–897 (RFCGIYGYRL…WEVNKPGEVC (437 aa)). The short motif at 474–482 (WEEKIPNPS) is the Box 1 motif element. Disordered stretches follow at residues 498 to 517 (GSMSAFTSGSPPHQGPWGSR), 532 to 630 (SEVS…EYLC), 648 to 812 (PGQA…QPEG), and 830 to 849 (PGPLSLRSKPSSPGPGPEIK). Residues 564 to 574 (EQPPSPQPGPP) show a composition bias toward pro residues. The span at 723–752 (SGASSVSLVPSLGLPSDQTPSLCPGLASGP) shows a compositional bias: low complexity. Y766 is modified (phosphotyrosine). The span at 830 to 840 (PGPLSLRSKPS) shows a compositional bias: low complexity.

Belongs to the type I cytokine receptor family. Type 4 subfamily. As to quaternary structure, heterodimer of an alpha and a beta subunit. The beta subunit is common to the IL3, IL5 and GM-CSF receptors. The signaling GM-CSF receptor complex is a dodecamer of two head-to-head hexamers of two alpha, two beta, and two ligand subunits. Interacts with TMEM102; this interaction occurs preferentially in the absence of CSF2. Interacts with FCER1G; this interaction is direct. Interacts with LYN. Interacts with JAK1. Post-translationally, may be phosphorylated by LYN.

It is found in the membrane. Its function is as follows. Cell surface receptor that plays a role in immune response and controls the production and differentiation of hematopoietic progenitor cells into lineage-restricted cells. Acts by forming an heterodimeric receptor through interaction with different partners such as IL3RA, IL5RA or CSF2RA. In turn, participates in various signaling pathways including interleukin-3, interleukin-5 and granulocyte-macrophage colony-stimulating factor/CSF2 pathways. In unstimulated conditions, interacts constitutively with JAK1 and ligand binding leads to JAK1 stimulation and subsequent activation of the JAK-STAT pathway. In Homo sapiens (Human), this protein is Cytokine receptor common subunit beta (CSF2RB).